Reading from the N-terminus, the 285-residue chain is 4-hydroxybenzoate octaprenyltransferase (285 aa).

The next 7 helical transmembrane spans lie at 17–37, 41–61, 92–112, 135–155, 158–178, 216–236, and 263–283; these read PVGIFLLLWPTLWALWIAGAG, PKVLLVFVAGVALMRSAGCVI, LLLFAGLCLVAFGLVLLLNPL, HWPQAYLGAAFGWAVPMAFAA, GTVPIAAWLLFIATVLWATVY, ALLLLLFWIGYREGLGFYYYL, and AFLNNNAFGAVIFGGIALHYL.

This sequence belongs to the UbiA prenyltransferase family. Mg(2+) serves as cofactor.

Its subcellular location is the cell inner membrane. It carries out the reaction all-trans-octaprenyl diphosphate + 4-hydroxybenzoate = 4-hydroxy-3-(all-trans-octaprenyl)benzoate + diphosphate. Its pathway is cofactor biosynthesis; ubiquinone biosynthesis. In terms of biological role, catalyzes the prenylation of para-hydroxybenzoate (PHB) with an all-trans polyprenyl group. Mediates the second step in the final reaction sequence of ubiquinone-8 (UQ-8) biosynthesis, which is the condensation of the polyisoprenoid side chain with PHB, generating the first membrane-bound Q intermediate 3-octaprenyl-4-hydroxybenzoate. The chain is 4-hydroxybenzoate octaprenyltransferase from Nitrosococcus oceani (strain ATCC 19707 / BCRC 17464 / JCM 30415 / NCIMB 11848 / C-107).